The chain runs to 539 residues: Phosphoenolpyruvate carboxykinase (ATP) (539 aa).

Arg64, Tyr206, and Lys212 together coordinate substrate. ATP-binding positions include Lys212, His231, and Gly247–Thr255. Lys212 and His231 together coordinate Mn(2+). Position 268 (Asp268) interacts with Mn(2+). Residues Glu296, Arg332, Arg448–Ile449, and Thr454 each bind ATP. Arg332 provides a ligand contact to substrate.

This sequence belongs to the phosphoenolpyruvate carboxykinase (ATP) family. As to quaternary structure, monomer. The cofactor is Mn(2+).

It is found in the cytoplasm. The catalysed reaction is oxaloacetate + ATP = phosphoenolpyruvate + ADP + CO2. It functions in the pathway carbohydrate biosynthesis; gluconeogenesis. Functionally, involved in the gluconeogenesis. Catalyzes the conversion of oxaloacetate (OAA) to phosphoenolpyruvate (PEP) through direct phosphoryl transfer between the nucleoside triphosphate and OAA. The protein is Phosphoenolpyruvate carboxykinase (ATP) of Salmonella agona (strain SL483).